Reading from the N-terminus, the 85-residue chain is CDC42 small effector protein 2 (85 aa).

2 S-palmitoyl cysteine lipidation sites follow: cysteine 10 and cysteine 11. The 14-residue stretch at 29 to 42 (IGEPTNFVHTAHVG) folds into the CRIB domain.

The protein belongs to the CDC42SE/SPEC family.

The protein resides in the cytoplasm. It is found in the cytoskeleton. Its subcellular location is the cell membrane. Functionally, probably involved in the organization of the actin cytoskeleton by acting downstream of CDC42, inducing actin filament assembly. The chain is CDC42 small effector protein 2 (cdc42se2) from Danio rerio (Zebrafish).